Reading from the N-terminus, the 182-residue chain is CDP-diacylglycerol--glycerol-3-phosphate 3-phosphatidyltransferase (182 aa).

The Cytoplasmic portion of the chain corresponds to 1-12 (MQLNIPTWLTLF). The chain crosses the membrane as a helical span at residues 13 to 37 (RVVLIPFFVLAFYLPFVWAPMVCAI). Over 38-60 (IFVFAAATDWFDGFLARRWKQTT) the chain is Periplasmic. The helical transmembrane segment at 61–81 (RFGAFLDPVADKVMVAIALVL) threads the bilayer. At 82–86 (VAEHY) the chain is on the cytoplasmic side. The chain crosses the membrane as a helical span at residues 87-107 (HVWWITLPAATMIAREIIISS). Residues 108–145 (LREWMAEIGKRSSVAVSWIGKVKTTAQMGSLVGLLWRP) lie on the Periplasmic side of the membrane. A helical transmembrane segment spans residues 146 to 168 (DHNIELASFVLLYIAAVLTFWSM). The Cytoplasmic portion of the chain corresponds to 169-181 (FQYLNAAWKDLLE).

It belongs to the CDP-alcohol phosphatidyltransferase class-I family.

Its subcellular location is the cell inner membrane. The enzyme catalyses a CDP-1,2-diacyl-sn-glycerol + sn-glycerol 3-phosphate = a 1,2-diacyl-sn-glycero-3-phospho-(1'-sn-glycero-3'-phosphate) + CMP + H(+). Its pathway is phospholipid metabolism; phosphatidylglycerol biosynthesis; phosphatidylglycerol from CDP-diacylglycerol: step 1/2. Catalyzes the conversion of cytidine diphosphate diacylglycerol (CDP-DG) and glycerol 3-phosphate into phosphatidylglycerol. Essential for the synthesis of anionic phospholipids, thereby playing a role in balancing the ratio of zwitterionic and anionic phospholipids, which is thought to be important for normal membrane function. This Yersinia enterocolitica serotype O:8 / biotype 1B (strain NCTC 13174 / 8081) protein is CDP-diacylglycerol--glycerol-3-phosphate 3-phosphatidyltransferase.